We begin with the raw amino-acid sequence, 86 residues long: Putative membrane protein insertion efficiency factor (86 aa).

It belongs to the UPF0161 family.

It is found in the cell inner membrane. Could be involved in insertion of integral membrane proteins into the membrane. This chain is Putative membrane protein insertion efficiency factor, found in Ruegeria sp. (strain TM1040) (Silicibacter sp.).